The sequence spans 232 residues: BTB/POZ domain-containing protein KCTD11 (232 aa).

Positions 1–49 (MLGAMFRAGTPMPPNLNSQGGGHYFIDRDGKAFRHILNFLRLGRLDLPR) constitute a BTB domain.

In terms of assembly, homopentamer. Interacts with KCTD6 and KCTD21; KCTD11 and KCTD6 or KCTD21 may associate in pentameric assemblies. Component of the BCR(KCTD11) E3 ubiquitin ligase complex, at least composed of CUL3 and KCTD11 and RBX1. Interacts (via BTB domain) with CUL3; initially a 4:4 stoichiometry has been reported, however, electron microscopy revealed pentameric states of the BTB domain. As to expression, higher expression in cerebellum than in whole brain and lower expression in medulloblastoma.

It functions in the pathway protein modification; protein ubiquitination. In terms of biological role, plays a role as a marker and a regulator of neuronal differentiation; Up-regulated by a variety of neurogenic signals, such as retinoic acid, epidermal growth factor/EGF and NGFB/nerve growth factor. Induces apoptosis, growth arrest and the expression of cyclin-dependent kinase inhibitor CDKN1B. Plays a role as a tumor repressor and inhibits cell growth and tumorigenicity of medulloblastoma (MDB). Acts as a probable substrate-specific adapter for a BCR (BTB-CUL3-RBX1) E3 ubiquitin-protein ligase complex towards HDAC1. Functions as antagonist of the Hedgehog pathway on cell proliferation and differentiation by affecting the nuclear transfer of transcription factor GLI1, thus maintaining cerebellar granule cells in undifferentiated state, this effect probably occurs via HDAC1 down-regulation, keeping GLI1 acetylated and inactive. When knock-down, Hedgehog antagonism is impaired and proliferation of granule cells is sustained. Activates the caspase cascade. The protein is BTB/POZ domain-containing protein KCTD11 (KCTD11) of Homo sapiens (Human).